Consider the following 123-residue polypeptide: Small ribosomal subunit protein uS12 (123 aa).

Aspartate 89 is subject to 3-methylthioaspartic acid.

It belongs to the universal ribosomal protein uS12 family. Part of the 30S ribosomal subunit. Contacts proteins S8 and S17. May interact with IF1 in the 30S initiation complex.

In terms of biological role, with S4 and S5 plays an important role in translational accuracy. Interacts with and stabilizes bases of the 16S rRNA that are involved in tRNA selection in the A site and with the mRNA backbone. Located at the interface of the 30S and 50S subunits, it traverses the body of the 30S subunit contacting proteins on the other side and probably holding the rRNA structure together. The combined cluster of proteins S8, S12 and S17 appears to hold together the shoulder and platform of the 30S subunit. The polypeptide is Small ribosomal subunit protein uS12 (Citrifermentans bemidjiense (strain ATCC BAA-1014 / DSM 16622 / JCM 12645 / Bem) (Geobacter bemidjiensis)).